The primary structure comprises 97 residues: Putative membrane protein insertion efficiency factor (97 aa).

The protein belongs to the UPF0161 family.

The protein localises to the cell membrane. Its function is as follows. Could be involved in insertion of integral membrane proteins into the membrane. The chain is Putative membrane protein insertion efficiency factor from Lactobacillus helveticus (strain DPC 4571).